The primary structure comprises 194 residues: Phosphoheptose isomerase (194 aa).

The 158-residue stretch at 37–194 folds into the SIS domain; it reads IANSFKQGGK…LIEFEMAKTA (158 aa). 52–54 provides a ligand contact to substrate; the sequence is NGG. Zn(2+) contacts are provided by His61 and Glu65. Substrate is bound by residues Glu65, 93 to 94, 119 to 121, Ser124, and Gln172; these read ND and STS. Zn(2+) is bound by residues Gln172 and His180.

It belongs to the SIS family. GmhA subfamily. As to quaternary structure, homotetramer. The cofactor is Zn(2+).

The protein localises to the cytoplasm. It catalyses the reaction 2 D-sedoheptulose 7-phosphate = D-glycero-alpha-D-manno-heptose 7-phosphate + D-glycero-beta-D-manno-heptose 7-phosphate. The protein operates within carbohydrate biosynthesis; D-glycero-D-manno-heptose 7-phosphate biosynthesis; D-glycero-alpha-D-manno-heptose 7-phosphate and D-glycero-beta-D-manno-heptose 7-phosphate from sedoheptulose 7-phosphate: step 1/1. It participates in bacterial outer membrane biogenesis; LOS core biosynthesis. Catalyzes the isomerization of sedoheptulose 7-phosphate in D-glycero-D-manno-heptose 7-phosphate. The sequence is that of Phosphoheptose isomerase from Haemophilus ducreyi (strain 35000HP / ATCC 700724).